The sequence spans 728 residues: Catalase-peroxidase (728 aa).

The first 19 residues, 1–19 (MSTEAKCPVTGGATRSSSA), serve as a signal peptide directing secretion. The interval 1–20 (MSTEAKCPVTGGATRSSSAG) is disordered. The segment at residues 96–219 (WHAAGTYRIG…LAAVQMGLIY (124 aa)) is a cross-link (tryptophyl-tyrosyl-methioninium (Trp-Tyr) (with M-245)). Histidine 97 (proton acceptor) is an active-site residue. Residues 219–245 (YVNPEGPNGKPDPVAAARDIRETFARM) constitute a cross-link (tryptophyl-tyrosyl-methioninium (Tyr-Met) (with W-96)). Histidine 260 serves as a coordination point for heme b.

It belongs to the peroxidase family. Peroxidase/catalase subfamily. As to quaternary structure, homodimer or homotetramer. The cofactor is heme b. Formation of the three residue Trp-Tyr-Met cross-link is important for the catalase, but not the peroxidase activity of the enzyme.

The catalysed reaction is H2O2 + AH2 = A + 2 H2O. It carries out the reaction 2 H2O2 = O2 + 2 H2O. In terms of biological role, bifunctional enzyme with both catalase and broad-spectrum peroxidase activity. This Acidiphilium cryptum (strain JF-5) protein is Catalase-peroxidase.